Here is an 87-residue protein sequence, read N- to C-terminus: Small archaeal modifier protein 1 (87 aa).

Gly-87 carries the post-translational modification 1-thioglycine; alternate. The residue at position 87 (Gly-87) is a Glycyl adenylate; alternate. A Glycyl lysine isopeptide (Gly-Lys) (interchain with K-? in acceptor proteins); alternate cross-link involves residue Gly-87.

The C-terminal glycine is likely acyl-adenylated (-COAMP) by UbaA, and also probably thiocarboxylated (-COSH) to function in sulfur transfer.

Functions as a protein modifier covalently attached to lysine residues of substrate proteins, as well as a sulfur carrier in molybdenum cofactor (MoCo) biosynthesis. The protein modification process is termed sampylation and involves the formation of an isopeptide bond between the SAMP1 C-terminal glycine carboxylate and the epsilon-amino group of lysine residues on target proteins. May serve as a proteolytic signal in the cell to target proteins for degradation by proteasomes. This is Small archaeal modifier protein 1 (samp1) from Haloferax volcanii (strain ATCC 29605 / DSM 3757 / JCM 8879 / NBRC 14742 / NCIMB 2012 / VKM B-1768 / DS2) (Halobacterium volcanii).